The following is a 67-amino-acid chain: SPbeta prophage-derived uncharacterized protein YoqK (67 aa).

This chain is SPbeta prophage-derived uncharacterized protein YoqK (yoqK), found in Bacillus subtilis (strain 168).